The following is a 94-amino-acid chain: Small ribosomal subunit protein bS20 (94 aa).

It belongs to the bacterial ribosomal protein bS20 family.

Functionally, binds directly to 16S ribosomal RNA. The protein is Small ribosomal subunit protein bS20 of Symbiobacterium thermophilum (strain DSM 24528 / JCM 14929 / IAM 14863 / T).